A 405-amino-acid chain; its full sequence is tRNA N6-adenosine threonylcarbamoyltransferase, mitochondrial (405 aa).

Residues 1–19 (MAKYISNLSRIAVVRGRVS) constitute a mitochondrion transit peptide. The a divalent metal cation site is built by His-138 and His-142. Residues 160–164 (LISGG), Asp-193, Gly-213, Glu-217, 320–321 (SN), and Thr-348 each bind substrate. An a divalent metal cation-binding site is contributed by Asp-349.

Belongs to the KAE1 / TsaD family. In terms of assembly, monomer. A divalent metal cation serves as cofactor.

Its subcellular location is the mitochondrion. It carries out the reaction L-threonylcarbamoyladenylate + adenosine(37) in tRNA = N(6)-L-threonylcarbamoyladenosine(37) in tRNA + AMP + H(+). In terms of biological role, required for the formation of a threonylcarbamoyl group on adenosine at position 37 (t(6)A37) in mitochondrial tRNAs that read codons beginning with adenine. Probably involved in the transfer of the threonylcarbamoyl moiety of threonylcarbamoyl-AMP (TC-AMP) to the N6 group of A37. Involved in mitochondrial genome maintenance. The sequence is that of tRNA N6-adenosine threonylcarbamoyltransferase, mitochondrial from Xenopus tropicalis (Western clawed frog).